Here is a 134-residue protein sequence, read N- to C-terminus: Ribonuclease P protein component 2 (134 aa).

It belongs to the eukaryotic/archaeal RNase P protein component 2 family. Consists of a catalytic RNA component and at least 4-5 protein subunits. Forms a subcomplex with Rnp3 which stimulates the catalytic RNA.

It is found in the cytoplasm. It catalyses the reaction Endonucleolytic cleavage of RNA, removing 5'-extranucleotides from tRNA precursor.. Functionally, part of ribonuclease P, a protein complex that generates mature tRNA molecules by cleaving their 5'-ends. This Methanocaldococcus jannaschii (strain ATCC 43067 / DSM 2661 / JAL-1 / JCM 10045 / NBRC 100440) (Methanococcus jannaschii) protein is Ribonuclease P protein component 2.